Reading from the N-terminus, the 344-residue chain is Dihydroorotate dehydrogenase (quinone) (344 aa).

Residues 65-69 and Thr89 each bind FMN; that span reads AGLDK. Lys69 is a substrate binding site. 114–118 contacts substrate; it reads NRMGF. FMN contacts are provided by Asn142 and Asn175. Asn175 serves as a coordination point for substrate. The active-site Nucleophile is Ser178. Asn180 provides a ligand contact to substrate. FMN is bound by residues Lys220 and Thr248. Residue 249–250 coordinates substrate; sequence NT. FMN is bound by residues Gly271, Gly300, and 321–322; that span reads YT.

This sequence belongs to the dihydroorotate dehydrogenase family. Type 2 subfamily. In terms of assembly, monomer. It depends on FMN as a cofactor.

The protein resides in the cell membrane. The catalysed reaction is (S)-dihydroorotate + a quinone = orotate + a quinol. The protein operates within pyrimidine metabolism; UMP biosynthesis via de novo pathway; orotate from (S)-dihydroorotate (quinone route): step 1/1. In terms of biological role, catalyzes the conversion of dihydroorotate to orotate with quinone as electron acceptor. In Paraburkholderia phymatum (strain DSM 17167 / CIP 108236 / LMG 21445 / STM815) (Burkholderia phymatum), this protein is Dihydroorotate dehydrogenase (quinone).